A 420-amino-acid polypeptide reads, in one-letter code: Subtilisin (420 aa).

Residues 1-31 (MKRSGKIFTTAMLAVTLMMPAMGVSANEGNA) form the signal peptide. A propeptide spanning residues 32–111 (AAEGNEKFRV…DKPEALYNAM (80 aa)) is cleaved from the precursor. Gln-115 contributes to the Ca(2+) binding site. In terms of domain architecture, Peptidase S8 spans 118–420 (PWGIKAIYNN…ASGFGFATVQ (303 aa)). The Charge relay system role is filled by Asp-145. A Ca(2+)-binding site is contributed by Asp-154. Catalysis depends on charge relay system residues His-182 and Ser-360.

The protein belongs to the peptidase S8 family. Requires Ca(2+) as cofactor.

The protein resides in the secreted. The enzyme catalyses Hydrolysis of proteins with broad specificity for peptide bonds, and a preference for a large uncharged residue in P1. Hydrolyzes peptide amides.. Subtilisin is an extracellular alkaline serine protease, it catalyzes the hydrolysis of proteins and peptide amides. This is Subtilisin (sub1) from Bacillus sp. (strain TA39).